A 363-amino-acid polypeptide reads, in one-letter code: NAD(P)H-quinone oxidoreductase subunit 1, chloroplastic (363 aa).

Helical transmembrane passes span 30–50 (LVPI…IVWL), 98–118 (FSIG…IIPF), 129–149 (IGVF…LMSG), 248–268 (YSGI…LVSS), 300–320 (VFGT…FLFI), and 336–356 (LLNL…LLTT).

Belongs to the complex I subunit 1 family. In terms of assembly, NDH is composed of at least 16 different subunits, 5 of which are encoded in the nucleus.

The protein localises to the plastid. It localises to the chloroplast thylakoid membrane. It carries out the reaction a plastoquinone + NADH + (n+1) H(+)(in) = a plastoquinol + NAD(+) + n H(+)(out). The enzyme catalyses a plastoquinone + NADPH + (n+1) H(+)(in) = a plastoquinol + NADP(+) + n H(+)(out). Its function is as follows. NDH shuttles electrons from NAD(P)H:plastoquinone, via FMN and iron-sulfur (Fe-S) centers, to quinones in the photosynthetic chain and possibly in a chloroplast respiratory chain. The immediate electron acceptor for the enzyme in this species is believed to be plastoquinone. Couples the redox reaction to proton translocation, and thus conserves the redox energy in a proton gradient. This chain is NAD(P)H-quinone oxidoreductase subunit 1, chloroplastic, found in Vitis vinifera (Grape).